Reading from the N-terminus, the 89-residue chain is MLKQSIEIINKLGLHARASNKFTQTASQFKSEVWVTKNDSRVNGKSIMGLMMLAAAKGTVIELETDGADEAEAMRALTDLINGYFGEGE.

Residues 1 to 88 (MLKQSIEIIN…DLINGYFGEG (88 aa)) enclose the HPr domain. The Pros-phosphohistidine intermediate role is filled by H15. S46 bears the Phosphoserine; by HPrK/P mark.

This sequence belongs to the HPr family.

The protein localises to the cytoplasm. Phosphorylation on Ser-46 inhibits the phosphoryl transfer from enzyme I to HPr. In terms of biological role, general (non sugar-specific) component of the phosphoenolpyruvate-dependent sugar phosphotransferase system (sugar PTS). This major carbohydrate active-transport system catalyzes the phosphorylation of incoming sugar substrates concomitantly with their translocation across the cell membrane. The phosphoryl group from phosphoenolpyruvate (PEP) is transferred to the phosphoryl carrier protein HPr by enzyme I. Phospho-HPr then transfers it to the PTS EIIA domain. The chain is Phosphocarrier protein HPr (ptsH) from Neisseria meningitidis serogroup A / serotype 4A (strain DSM 15465 / Z2491).